The chain runs to 685 residues: Cilia- and flagella-associated protein 36 (685 aa).

The disordered stretch occupies residues 1 to 20; the sequence is MLRRFSKKNKNPEGGSDDAS. The stretch at 197–242 forms a coiled coil; the sequence is SEELEMMAQNSRIQREALEQEIRKEEILLQQALDEGARAQNQNQNQ. Low complexity predominate over residues 287-310; sequence TGTMTSSTGVSVGTLTNTGVSSGT. The disordered stretch occupies residues 287–573; it reads TGTMTSSTGV…LRGNKYDGDV (287 aa). Residues 363–372 are compositionally biased toward basic and acidic residues; the sequence is EAEKSKRERP. Positions 410 to 434 are enriched in polar residues; the sequence is GTTSKKSIATVTASPEMSSKTTQME. 2 stretches are compositionally biased toward basic and acidic residues: residues 439-456 and 508-557; these read GEGK…ERKY and HEPR…ESKP.

Belongs to the CFAP36 family. Expressed in amphid and phasmid ciliated neurons.

Its subcellular location is the cell projection. It localises to the cilium. The protein localises to the cytoplasm. It is found in the cytoskeleton. The protein resides in the cilium axoneme. The sequence is that of Cilia- and flagella-associated protein 36 from Caenorhabditis elegans.